A 500-amino-acid chain; its full sequence is MHLSSSLLFTSALLAGGINASPATNAYRRQGADMRTIIGDTTPVLSNTTAVHFPGSGDFFSVTERWDVYRPPSYQAAITPTTEADIVSLVKMAKQHNIPFLATGGRHGYGTSLGKCQEGLAIDLSHFKDVKIDKQRETVTIGPGVVFADVFPVVSDAGYQVQTGTCSCVGMIGATIGAGIGRLDGVHGLVIDALESVRMITANGDIVEASKTKNPELFWGIRGAGANFGIITQATYKMHKSMGDIISFDLIYEPEQNVTLFNTVANMYLPPGLTVETIMSYNQTTEKPTIIVSSTYAGGSEAEARRWMQPLLRLNPWYKDIKAIPWKRMSKETALGLDKEVCANSQVFDIYGVNLRRHDANTWVKTFNKLAKFWNEQPAAQSSSVVLETWPNQAVVAVPDSETAYPWRDATTYVMIQMRWDAPGNPVETVADAMGRELRNDFAKTSGYNGLTVYVNYAHGDETPEQMYGRNKLHRLAKLKKQYDPSSVFGFHNPLPTSYP.

A signal peptide spans Met1–Ala20. Asn47 is a glycosylation site (N-linked (GlcNAc...) asparagine). Residues Tyr69–Ser241 form the FAD-binding PCMH-type domain. N-linked (GlcNAc...) asparagine glycans are attached at residues Asn257 and Asn282.

This sequence belongs to the oxygen-dependent FAD-linked oxidoreductase family. The cofactor is FAD.

Its function is as follows. FAD-linked oxidoreductase; part of the gene cluster that mediates the biosynthesis of sordarial, a salicylic aldehyde structurally related to the phytotoxin pyriculol. The most interesting aspect of this pathway is formation of an aromatic product from the highly reducing polyketide synthase srdA. SrdA synthesizes a reduced polyketide chain from one molecule of acetyl-CoA and five molecules of malonyl-CoA. The polyketide chain is then reductively released as an aldehyde. The oxidoreductases srdC, srdD and srdE then oxidize one of the hydroxy groups to facilitate the intramolecular aldol condensation, followed by dehydration to yield a salicylic aldehyde. This aldehyde can undergo facile reduction by endogenous reductases to yield the alcohol 1-hydroxy-2-hydroxymethyl-3-pent-1,3-dienylbenzene. The flavin-dependent srdI counteract against the propensity of the aldehydes to be reduced under physiological conditions and is responsible for reoxidizing 1-hydroxy-2-hydroxymethyl-3-pent-1,3-dienylbenzene back to the salicylic aldehyde. This salicylic aldehyde is then selectively epoxidized by the cupin-domain-containing oxidoreductase srdB to yield the epoxide, which can be hydrolyzed stereoselectively by the hydrolase srdG to give the final product sordarial. The sequence is that of FAD-linked oxidoreductase srdI from Neurospora crassa (strain ATCC 24698 / 74-OR23-1A / CBS 708.71 / DSM 1257 / FGSC 987).